The sequence spans 317 residues: Putative 2-hydroxyacid dehydrogenase SERP1888 (317 aa).

Residues 155–156, 234–236, and Asp260 each bind NAD(+); these read EI and AGR. Residue Arg236 is part of the active site. The active site involves Glu265. His283 serves as the catalytic Proton donor. An NAD(+)-binding site is contributed by 283–286; the sequence is HIGN.

Belongs to the D-isomer specific 2-hydroxyacid dehydrogenase family.

This chain is Putative 2-hydroxyacid dehydrogenase SERP1888, found in Staphylococcus epidermidis (strain ATCC 35984 / DSM 28319 / BCRC 17069 / CCUG 31568 / BM 3577 / RP62A).